The chain runs to 188 residues: Elongation factor P (188 aa).

The residue at position 34 (lysine 34) is an N6-(3,6-diaminohexanoyl)-5-hydroxylysine.

Belongs to the elongation factor P family. May be beta-lysylated on the epsilon-amino group of Lys-34 by the combined action of EpmA and EpmB, and then hydroxylated on the C5 position of the same residue by EpmC (if this protein is present). Lysylation is critical for the stimulatory effect of EF-P on peptide-bond formation. The lysylation moiety may extend toward the peptidyltransferase center and stabilize the terminal 3-CCA end of the tRNA. Hydroxylation of the C5 position on Lys-34 may allow additional potential stabilizing hydrogen-bond interactions with the P-tRNA.

The protein localises to the cytoplasm. Its pathway is protein biosynthesis; polypeptide chain elongation. In terms of biological role, involved in peptide bond synthesis. Alleviates ribosome stalling that occurs when 3 or more consecutive Pro residues or the sequence PPG is present in a protein, possibly by augmenting the peptidyl transferase activity of the ribosome. Modification of Lys-34 is required for alleviation. The chain is Elongation factor P from Vibrio atlanticus (strain LGP32) (Vibrio splendidus (strain Mel32)).